Reading from the N-terminus, the 662-residue chain is Protein Aster-C (662 aa).

Residues 1-34 form a disordered region; sequence MEGAPTVRQVMNEGDSSLATELQEDVEENPSPTV. In terms of domain architecture, GRAM spans 69 to 136; that stretch reads EEYRRQFTHL…KNITFMTKEK (68 aa). Disordered stretches follow at residues 212–237 and 250–284; these read SIEDVRPRSPGRSSLDDSGERDEKLS and VSETESFDGNSSKGGLGKEESQNEKQTKKSLLPTL. Positions 265–276 are enriched in basic and acidic residues; the sequence is LGKEESQNEKQT. The region spanning 326–497 is the VASt domain; that stretch reads HGRLFINRIF…DLLIEESILN (172 aa). The helical transmembrane segment at 557-577 threads the bilayer; that stretch reads LIVVMSIFVLLLVLLNVTLFL.

The protein resides in the endoplasmic reticulum membrane. It localises to the cell membrane. Functionally, cholesterol transporter that mediates non-vesicular transport of cholesterol from the plasma membrane (PM) to the endoplasmic reticulum (ER). Contains unique domains for binding cholesterol and the PM, thereby serving as a molecular bridge for the transfer of cholesterol from the PM to the ER. Plays a crucial role in cholesterol homeostasis and has the unique ability to localize to the PM based on the level of membrane cholesterol. In lipid-poor conditions localizes to the ER membrane and in response to excess cholesterol in the PM is recruited to the endoplasmic reticulum-plasma membrane contact sites (EPCS) which is mediated by the GRAM domain. At the EPCS, the sterol-binding VASt/ASTER domain binds to the cholesterol in the PM and facilitates its transfer from the PM to ER. The chain is Protein Aster-C (GRAMD1C) from Pongo abelii (Sumatran orangutan).